A 213-amino-acid chain; its full sequence is RNA chaperone ProQ (213 aa).

The tract at residues 105-150 (ESQEKAKAKRAAQTPKAAPAGKAPAKKAPKKVAVPARKTERPAKAA) is disordered. Low complexity predominate over residues 115–127 (AAQTPKAAPAGKA).

It belongs to the ProQ family.

The protein localises to the cytoplasm. Functionally, RNA chaperone with significant RNA binding, RNA strand exchange and RNA duplexing activities. The protein is RNA chaperone ProQ of Shewanella oneidensis (strain ATCC 700550 / JCM 31522 / CIP 106686 / LMG 19005 / NCIMB 14063 / MR-1).